A 628-amino-acid polypeptide reads, in one-letter code: MLEKYEILKDYKGPFDIKNYDYETLQKLAQEVRDYIINVTSKNGGHVGPSLGVVELTIALLRVFNPPEDVIVWDIGHQGYPWKILTDRKEQFPTLRQYKGISGFLRREESIYDAFGAGHSSTSISAALGFRIGKDLKGEKEDYVIAVIGDGALTAGMAYEALNNAGHIRPDRFIVILNDNEMSISPNVGAISTYLNRIISGHFVQETRQKIKNFLQHFGETPLRIMKLTEEFLKGLISPGVIFEELGFNYIGPIDGHDIKALEDTLNNVKDIKGPVLLHVYTKKGKGYKPAEENPVKWHGVAPYKVESGEIIKKSSPPTWTSVFGKALVELAERDEKIVAITPAMREGSGLVEFAKRFPDRFFDVGIAEQHACTFAAGLAAEGLRPVAAYYSTFLQRAYDQVIHDVALQNLPVTFAIDRAGLVGDDGPTHHGVFDLSYLRCVPNMVVCAPKDEQELRDLLYTGIYSGKPFALRYPRGAAYGVPTEGFKKIEIGTWEELLEGEDCVILAVGYPVYQALRAAEKLYKEGIRVGVVNARFVKPMDEKMLRDLANRYDTFITVEDNTVVGGFGSGVLEFFAREGIMKRVINLGVPDRFIEHGKQDILRNLVGIDAEGIEKAVRDALKGGRLI.

Thiamine diphosphate is bound by residues His-77 and 118–120; that span reads GHS. A Mg(2+)-binding site is contributed by Asp-150. Residues 151–152, Asn-180, Tyr-288, and Glu-369 contribute to the thiamine diphosphate site; that span reads GA. Asn-180 is a binding site for Mg(2+).

The protein belongs to the transketolase family. DXPS subfamily. Homodimer. The cofactor is Mg(2+). It depends on thiamine diphosphate as a cofactor.

The enzyme catalyses D-glyceraldehyde 3-phosphate + pyruvate + H(+) = 1-deoxy-D-xylulose 5-phosphate + CO2. It functions in the pathway metabolic intermediate biosynthesis; 1-deoxy-D-xylulose 5-phosphate biosynthesis; 1-deoxy-D-xylulose 5-phosphate from D-glyceraldehyde 3-phosphate and pyruvate: step 1/1. Its function is as follows. Catalyzes the acyloin condensation reaction between C atoms 2 and 3 of pyruvate and glyceraldehyde 3-phosphate to yield 1-deoxy-D-xylulose-5-phosphate (DXP). The chain is 1-deoxy-D-xylulose-5-phosphate synthase from Aquifex aeolicus (strain VF5).